We begin with the raw amino-acid sequence, 630 residues long: MDPLKLPKQEFADALGKISSRLGLAEVPEIEKTRRYGYFSARFHKYKIDPTRLRDAVEELSNAGFQYISGLSAEGLYVNADLNAKRLGELVFEAVAKMGKKYGFTEECQLGSFLVEHTSANPIHPLHIGHGRNAILGDSLARLLRFCDNRVEVHFYVDDCGVQVMYATIGYNAVRDEAREWIERAKPDLVVGHIYSATNAVAEIGRLKKEAERAQDDEHKRSLIGEIDEWVAVLKRLMESEGDLVAKVVERLGQRDVAGEAVELNRRYEAGDPEAKRVVREVVDLVLRGQRETLARLGIEIDRWDYESELAVWSGEASRIVEELQRRWPQYVEYKGGAVVFRADKFVDDFKLWDVLDLPKFIPPVTLTRSDGTTLYVTRDVAYALWQARQGFDKVVRVISTEQTHEQAHVRIILYALGFEDVAKKIVHYAYEMVNLPGMKMSARRGRYISLDEILDEAAERSASLVKEKSPEIAGVIAEKVGVGSVRYAFLSTSPRKPIEFRWEVVLNLRQNSGTFLQYTYVRAYSILEKAPDVERASVPEQMLEEEKELLVKIAEWPSVVREAVRALRPDYVAEYLDGLALLFNSYYEKAPVLKAVEGVRKFRIALVNAVKTVLEAGFYILGIPTLTKM.

The 'HIGH' region motif lies at 120–130; that stretch reads ANPIHPLHIGH.

It belongs to the class-I aminoacyl-tRNA synthetase family.

It localises to the cytoplasm. The enzyme catalyses tRNA(Arg) + L-arginine + ATP = L-arginyl-tRNA(Arg) + AMP + diphosphate. The polypeptide is Arginine--tRNA ligase (Pyrobaculum arsenaticum (strain DSM 13514 / JCM 11321 / PZ6)).